A 103-amino-acid chain; its full sequence is MYAVIKTGGKQYRVAAGEKIKVEQIPADVGSEITIDQVFMVGEGESVKIGTPVVSGATVTATVVSHGRHDKIKIFKMRRRKHYQKHQGHRQNYTELRIEAISA.

Belongs to the bacterial ribosomal protein bL21 family. As to quaternary structure, part of the 50S ribosomal subunit. Contacts protein L20.

This protein binds to 23S rRNA in the presence of protein L20. The sequence is that of Large ribosomal subunit protein bL21 from Aromatoleum aromaticum (strain DSM 19018 / LMG 30748 / EbN1) (Azoarcus sp. (strain EbN1)).